The following is an 85-amino-acid chain: CDC42 small effector protein 2 (85 aa).

S-palmitoyl cysteine attachment occurs at residues Cys-10 and Cys-11. Residues 29-42 (IGEPTNFVHTAHVG) enclose the CRIB domain.

It belongs to the CDC42SE/SPEC family.

It localises to the cytoplasm. It is found in the cytoskeleton. Its subcellular location is the cell membrane. Its function is as follows. Probably involved in the organization of the actin cytoskeleton by acting downstream of CDC42, inducing actin filament assembly. This chain is CDC42 small effector protein 2 (cdc42se2), found in Danio rerio (Zebrafish).